A 126-amino-acid chain; its full sequence is Holo-[acyl-carrier-protein] synthase (126 aa).

The Mg(2+) site is built by Asp-9 and Glu-58.

The protein belongs to the P-Pant transferase superfamily. AcpS family. Requires Mg(2+) as cofactor.

Its subcellular location is the cytoplasm. It carries out the reaction apo-[ACP] + CoA = holo-[ACP] + adenosine 3',5'-bisphosphate + H(+). In terms of biological role, transfers the 4'-phosphopantetheine moiety from coenzyme A to a Ser of acyl-carrier-protein. This Vibrio vulnificus (strain CMCP6) protein is Holo-[acyl-carrier-protein] synthase.